Here is a 33-residue protein sequence, read N- to C-terminus: Pheromone biosynthesis-activating neuropeptide (33 aa).

The disordered stretch occupies residues 1-33 (LADDMPATMADQEVYRPEPEQIDSRNKYFSPRL). Residues 13–26 (EVYRPEPEQIDSRN) show a composition bias toward basic and acidic residues. Leucine amide is present on Leu33.

It belongs to the pyrokinin family.

The protein resides in the secreted. Involved in the control of pheromone production in females. This Lymantria dispar (Gypsy moth) protein is Pheromone biosynthesis-activating neuropeptide.